Reading from the N-terminus, the 462-residue chain is Exodeoxyribonuclease 7 large subunit (462 aa).

Belongs to the XseA family. Heterooligomer composed of large and small subunits.

Its subcellular location is the cytoplasm. It catalyses the reaction Exonucleolytic cleavage in either 5'- to 3'- or 3'- to 5'-direction to yield nucleoside 5'-phosphates.. Its function is as follows. Bidirectionally degrades single-stranded DNA into large acid-insoluble oligonucleotides, which are then degraded further into small acid-soluble oligonucleotides. This is Exodeoxyribonuclease 7 large subunit from Pectobacterium atrosepticum (strain SCRI 1043 / ATCC BAA-672) (Erwinia carotovora subsp. atroseptica).